A 157-amino-acid polypeptide reads, in one-letter code: S-ribosylhomocysteine lyase (157 aa).

Histidine 54, histidine 58, and cysteine 126 together coordinate Fe cation.

The protein belongs to the LuxS family. As to quaternary structure, homodimer. The cofactor is Fe cation.

It carries out the reaction S-(5-deoxy-D-ribos-5-yl)-L-homocysteine = (S)-4,5-dihydroxypentane-2,3-dione + L-homocysteine. Its function is as follows. Involved in the synthesis of autoinducer 2 (AI-2) which is secreted by bacteria and is used to communicate both the cell density and the metabolic potential of the environment. The regulation of gene expression in response to changes in cell density is called quorum sensing. Catalyzes the transformation of S-ribosylhomocysteine (RHC) to homocysteine (HC) and 4,5-dihydroxy-2,3-pentadione (DPD). The polypeptide is S-ribosylhomocysteine lyase (Bacillus pumilus (strain SAFR-032)).